The chain runs to 573 residues: DNA damage-binding protein CMR1 (573 aa).

The tract at residues 27-94 (DSLNDSISRE…EMEKAEERKR (68 aa)) is disordered. Positions 72-152 (TMEDSEEDKQ…EEIKKEEDST (81 aa)) form a coiled coil. A compositionally biased stretch (basic and acidic residues) spans 79 to 94 (DKQMREEMEKAEERKR). WD repeat units follow at residues 218 to 259 (ITQQ…DDET), 268 to 308 (PHGK…STEV), 319 to 357 (DYPLGVSDINVADNNLLYMTTLSGNFYRYDMRSPFKQGE), 361 to 401 (LHDK…QKNS), 418 to 456 (HSRLSVSCVDWNHDNHLVCNGYDDTVNVFDLSGSDKLPL), 495 to 538 (GRWV…LCHL), and 542 to 573 (DRMTAVPAVSMLHPTENWCVGGSASGKVYLFE).

The protein belongs to the WD repeat DDB2/WDR76 family.

Its function is as follows. DNA-binding protein that binds to both single- and double-stranded DNA. Binds preferentially to UV-damaged DNA. May be involved in DNA-metabolic processes. The protein is DNA damage-binding protein CMR1 of Meyerozyma guilliermondii (strain ATCC 6260 / CBS 566 / DSM 6381 / JCM 1539 / NBRC 10279 / NRRL Y-324) (Yeast).